Consider the following 592-residue polypeptide: ATP-dependent lipid A-core flippase (592 aa).

Transmembrane regions (helical) follow at residues Leu31–Ile51, Ala76–Leu96, Ala134–Val154, Leu161–Ile181, Val261–Ala281, and Val288–Leu308. The region spanning Ile35 to Arg317 is the ABC transmembrane type-1 domain. The ABC transporter domain maps to Leu349–Ile587. Gly383–Thr390 contributes to the ATP binding site.

The protein belongs to the ABC transporter superfamily. Lipid exporter (TC 3.A.1.106) family. Homodimer.

The protein resides in the cell inner membrane. It catalyses the reaction ATP + H2O + lipid A-core oligosaccharideSide 1 = ADP + phosphate + lipid A-core oligosaccharideSide 2.. Functionally, involved in lipopolysaccharide (LPS) biosynthesis. Translocates lipid A-core from the inner to the outer leaflet of the inner membrane. Transmembrane domains (TMD) form a pore in the inner membrane and the ATP-binding domain (NBD) is responsible for energy generation. This Ralstonia nicotianae (strain ATCC BAA-1114 / GMI1000) (Ralstonia solanacearum) protein is ATP-dependent lipid A-core flippase.